The following is a 712-amino-acid chain: Ribosomal RNA large subunit methyltransferase K/L (712 aa).

The 112-residue stretch at 43–154 (LAYRITLWTR…NGQLTISMNF (112 aa)) folds into the THUMP domain.

Belongs to the methyltransferase superfamily. RlmKL family.

It localises to the cytoplasm. It carries out the reaction guanosine(2445) in 23S rRNA + S-adenosyl-L-methionine = N(2)-methylguanosine(2445) in 23S rRNA + S-adenosyl-L-homocysteine + H(+). The enzyme catalyses guanosine(2069) in 23S rRNA + S-adenosyl-L-methionine = N(2)-methylguanosine(2069) in 23S rRNA + S-adenosyl-L-homocysteine + H(+). Its function is as follows. Specifically methylates the guanine in position 2445 (m2G2445) and the guanine in position 2069 (m7G2069) of 23S rRNA. The chain is Ribosomal RNA large subunit methyltransferase K/L from Shewanella frigidimarina (strain NCIMB 400).